The chain runs to 69 residues: Cytochrome c oxidase subunit 8A, mitochondrial (69 aa).

Residues 1-25 (MSVLTPLLLRGLTGSARRLPVPRAQ) constitute a mitochondrion transit peptide. The SIFI-degron motif lies at 2 to 19 (SVLTPLLLRGLTGSARRL). At 26-36 (VHSMPPEQKLG) the chain is on the mitochondrial matrix side. Residues 37–60 (VLELAIGFTSCLVTFLLPAGWILS) traverse the membrane as a helical segment. The Mitochondrial intermembrane portion of the chain corresponds to 61-69 (HLDSYKKRG).

Belongs to the cytochrome c oxidase VIII family. Component of the cytochrome c oxidase (complex IV, CIV), a multisubunit enzyme composed of 14 subunits. The complex is composed of a catalytic core of 3 subunits MT-CO1, MT-CO2 and MT-CO3, encoded in the mitochondrial DNA, and 11 supernumerary subunits COX4I, COX5A, COX5B, COX6A, COX6B, COX6C, COX7A, COX7B, COX7C, COX8 and NDUFA4, which are encoded in the nuclear genome. The complex exists as a monomer or a dimer and forms supercomplexes (SCs) in the inner mitochondrial membrane with NADH-ubiquinone oxidoreductase (complex I, CI) and ubiquinol-cytochrome c oxidoreductase (cytochrome b-c1 complex, complex III, CIII), resulting in different assemblies (supercomplex SCI(1)III(2)IV(1) and megacomplex MCI(2)III(2)IV(2)). Post-translationally, in response to mitochondrial stress, the precursor protein is ubiquitinated by the SIFI complex in the cytoplasm before mitochondrial import, leading to its degradation. Within the SIFI complex, UBR4 initiates ubiquitin chain that are further elongated or branched by KCMF1.

It localises to the mitochondrion inner membrane. It functions in the pathway energy metabolism; oxidative phosphorylation. Functionally, component of the cytochrome c oxidase, the last enzyme in the mitochondrial electron transport chain which drives oxidative phosphorylation. The respiratory chain contains 3 multisubunit complexes succinate dehydrogenase (complex II, CII), ubiquinol-cytochrome c oxidoreductase (cytochrome b-c1 complex, complex III, CIII) and cytochrome c oxidase (complex IV, CIV), that cooperate to transfer electrons derived from NADH and succinate to molecular oxygen, creating an electrochemical gradient over the inner membrane that drives transmembrane transport and the ATP synthase. Cytochrome c oxidase is the component of the respiratory chain that catalyzes the reduction of oxygen to water. Electrons originating from reduced cytochrome c in the intermembrane space (IMS) are transferred via the dinuclear copper A center (CU(A)) of subunit 2 and heme A of subunit 1 to the active site in subunit 1, a binuclear center (BNC) formed by heme A3 and copper B (CU(B)). The BNC reduces molecular oxygen to 2 water molecules using 4 electrons from cytochrome c in the IMS and 4 protons from the mitochondrial matrix. This Saimiri sciureus (Common squirrel monkey) protein is Cytochrome c oxidase subunit 8A, mitochondrial (COX8A).